The primary structure comprises 206 residues: Riboflavin transporter RibU (206 aa).

Helical transmembrane passes span 7–27, 42–62, 79–99, 113–133, 147–169, and 173–195; these read MVLI…ILQF, IIPV…IILF, WIGV…VWFF, IVLA…FYAL, IFAG…PTYL, and VLPF…VTVF.

The protein belongs to the prokaryotic riboflavin transporter (P-RFT) (TC 2.A.87) family. As to quaternary structure, in E.coli forms a stable energy-coupling factor (ECF) transporter complex composed of 2 membrane-embedded substrate-binding protein (S component), 2 ATP-binding proteins (A and A' components) and 2 transmembrane proteins (T component), probably with a stoichiometry of 2:1:1:2. May be able to interact with more than 1 S component at a time.

Its subcellular location is the cell membrane. Mediates riboflavin uptake, may also transport FMN and roseoflavin. Probably a riboflavin-binding protein that interacts with the energy-coupling factor (ECF) ABC-transporter complex. Unlike classic ABC transporters this ECF transporter provides the energy necessary to transport a number of different substrates. The substrates themselves are bound by transmembrane, not extracytoplasmic soluble proteins. Uptake of riboflavin into proteosomes containing EcfA1A2T and RibU has been demonstrated. Uptake requires hydrolyzable Mg-ATP. The polypeptide is Riboflavin transporter RibU (ribU) (Lactococcus lactis subsp. cremoris (strain MG1363)).